A 336-amino-acid chain; its full sequence is Dual specificity mitogen-activated protein kinase kinase sek-1 (336 aa).

In terms of domain architecture, Protein kinase spans 50–311 (LVVLEELGKG…YPELLAMPFM (262 aa)). ATP contacts are provided by residues 56–64 (LGKGGYGIV) and Lys79. Residue Asp176 is the Proton acceptor of the active site. Position 204 is a phosphoserine (Ser204). Thr208 carries the phosphothreonine modification.

Belongs to the protein kinase superfamily. STE Ser/Thr protein kinase family. MAP kinase kinase subfamily. As to quaternary structure, interacts with nsy-1. Interacts with unc-16. Requires Mg(2+) as cofactor. Expressed in linker cell in males.

The enzyme catalyses L-seryl-[protein] + ATP = O-phospho-L-seryl-[protein] + ADP + H(+). It catalyses the reaction L-threonyl-[protein] + ATP = O-phospho-L-threonyl-[protein] + ADP + H(+). The catalysed reaction is L-tyrosyl-[protein] + ATP = O-phospho-L-tyrosyl-[protein] + ADP + H(+). Its activity is regulated as follows. Activated by nsy-1-mediated phosphorylation. Its function is as follows. Dual specificity protein kinase which acts as an essential component of the p38 signal transduction pathway which is also composed of upstream effector nsy-1 and downstream effector pmk-1. May phosphorylate pmk-1. Downstream of CaMKII unc-43 and adapter protein tir-1, plays a role in determining asymmetric cell fates in olfactory AWC neurons during neuronal development. Activation results in the repression of odorant receptor str-2 expression in one of the 2 AWC neurons. Involved in resistance to pathogenic Gram-positive and Gram-negative bacterial and fungal infection. Involved in resistance to the nematotoxic C.cinerea galectin Cgl2. Probably by promoting pmk-1-mediated activation of skn-1, involved in the up-regulation of gcs-1 and glutathione-S-transferase gst-4 expression upon bacterial infection. Probably downstream of tir-1, required for the expression of antimicrobial peptide nlp-29 in the epidermis in response to fungal infection or physical injury. Regulates susceptibility of B.thuringiensis pore-forming toxin Cry5B and Cry21A. Involved in the response to oxidative stress. May regulate transcription factor daf-16 localization during oxidative stress. By phosphorylating pmk-1, regulates skn-1 localization during oxidative stress. By phosphorylating and activating pmk-1, plays a role in the stabilization of transcription factor rnt-1 in the intestine during oxidative stress. Up-regulates expression of gcs-1 in intestine upon arsenite treatment. Regulates germline proliferation in response to osmotic stress, starvation and germline apoptosis induced by heavy metals, such as Cu(2+). In association with mek-1, regulates germline cell apoptosis in response to oxidative, osmotic and heat shock stresses. Plays a role downstream of tir-1/nsy-1 in regulating susceptibility to anoxia. In males, by regulating pqn-41 expression, involved in non-apoptotic death of the linker cell which guides gonad elongation during larval development. Involved in egg laying. The polypeptide is Dual specificity mitogen-activated protein kinase kinase sek-1 (Caenorhabditis elegans).